The chain runs to 79 residues: Large ribosomal subunit protein uL24 (79 aa).

Positions 1-29 are disordered; sequence MPKLKKLLLKVSTSKPNTNPPSQNEEKGT. The segment covering 11–23 has biased composition (polar residues); the sequence is VSTSKPNTNPPSQ.

It belongs to the universal ribosomal protein uL24 family. In terms of assembly, part of the 50S ribosomal subunit.

Its function is as follows. One of two assembly initiator proteins, it binds directly to the 5'-end of the 23S rRNA, where it nucleates assembly of the 50S subunit. One of the proteins that surrounds the polypeptide exit tunnel on the outside of the subunit. The protein is Large ribosomal subunit protein uL24 (rplX) of Onion yellows phytoplasma (strain OY-M).